The following is a 98-amino-acid chain: Acylphosphatase (98 aa).

The region spanning 12–98 (TYYVRVRGVV…DKRFERFQQH (87 aa)) is the Acylphosphatase-like domain. Catalysis depends on residues R27 and N45.

It belongs to the acylphosphatase family.

The enzyme catalyses an acyl phosphate + H2O = a carboxylate + phosphate + H(+). The sequence is that of Acylphosphatase (acyP) from Burkholderia mallei (strain NCTC 10247).